The following is a 204-amino-acid chain: Protein Nef (204 aa).

The tract at residues 1–27 (MGNKWSKSWPQVRDRMRRAAPAPAADG) is disordered. Gly-2 carries N-myristoyl glycine; by host lipidation. Ser-6 is subject to Phosphoserine; by host. The interval 60-63 (TEEE) is acidic; interacts with host PACS1 and PACS2; stabilizes the interaction of NEF/MHC-I with host AP1M1; necessary for MHC-I internalization. The interval 67 to 76 (PVRPQVPLRP) is SH3-binding; interaction with Src family tyrosine kinases. The short motif at 70-73 (PQVP) is the PxxP; stabilizes the interaction of NEF/MHC-I with host AP1M1; necessary for MHC-I internalization element. The interval 106-122 (EILDLWVHNTQGYFPDW) is mediates dimerization, Nef-PTE1 interaction. The segment at 146 to 178 (VDPSEVEEANEGENNCLLHPACQHGIEDEEREV) is binding to ATP6V1H. Residues 162 to 163 (LL) carry the Dileucine internalization motif; necessary for CD4 internalization motif. Positions 172–173 (ED) match the Diacidic; necessary for CD4 internalization motif.

Belongs to the lentivirus primate group Nef protein family. In terms of assembly, monomer; cytosolic form. Homodimer; membrane bound form. Interacts with Nef associated p21-activated kinase (PAK2); this interaction activates PAK2. Associates with the Nef-MHC-I-AP1 complex; this complex is required for MHC-I internalization. Interacts (via C-terminus) with host PI3-kinase. Interacts with host PACS1; this interaction seems to be weak. Interacts with host PACS2. Interacts with host LCK and MAPK3; these interactions inhibit the kinase activity of the latter. Interacts with host ATP6V1H; this interaction may play a role in CD4 endocytosis. Associates with the CD4-Nef-AP2 complex; this complex is required for CD4 internalization. Interacts with host AP2 subunit alpha and AP2 subunit sigma2. Interacts with TCR-zeta chain; this interaction up-regulates the Fas ligand (FasL) surface expression. Interacts with host HCK, LYN, and SRC; these interactions activate the Src family kinases. Interacts with MAP3K5; this interaction inhibits the Fas and TNFR-mediated death signals. Interacts with beta-COP and PTE1. Interacts with human RACK1; this increases Nef phosphorylation by PKC. Interacts with TP53; this interaction decreases the half-life of TP53, protecting the infected cell against p53-mediated apoptosis. Post-translationally, the virion-associated Nef proteins are cleaved by the viral protease to release the soluble C-terminal core protein. Nef is probably cleaved concomitantly with viral structural proteins on maturation of virus particles. In terms of processing, myristoylated. Phosphorylated on serine residues, probably by host PKCdelta and theta.

It is found in the host cell membrane. Its subcellular location is the virion. The protein resides in the secreted. The protein localises to the host Golgi apparatus membrane. Its function is as follows. Factor of infectivity and pathogenicity, required for optimal virus replication. Alters numerous pathways of T-lymphocyte function and down-regulates immunity surface molecules in order to evade host defense and increase viral infectivity. Alters the functionality of other immunity cells, like dendritic cells, monocytes/macrophages and NK cells. In terms of biological role, in infected CD4(+) T-lymphocytes, down-regulates the surface MHC-I, mature MHC-II, CD4, CD28, CCR5 and CXCR4 molecules. Mediates internalization and degradation of host CD4 through the interaction of with the cytoplasmic tail of CD4, the recruitment of AP-2 (clathrin adapter protein complex 2), internalization through clathrin coated pits, and subsequent transport to endosomes and lysosomes for degradation. Diverts host MHC-I molecules to the trans-Golgi network-associated endosomal compartments by an endocytic pathway to finally target them for degradation. MHC-I down-regulation may involve AP-1 (clathrin adapter protein complex 1) or possibly Src family kinase-ZAP70/Syk-PI3K cascade recruited by PACS2. In consequence infected cells are masked for immune recognition by cytotoxic T-lymphocytes. Decreasing the number of immune receptors also prevents reinfection by more HIV particles (superinfection). Down-regulates host SERINC3 and SERINC5 thereby excluding these proteins from the viral particles. Virion infectivity is drastically higher when SERINC3 or SERINC5 are excluded from the viral envelope, because these host antiviral proteins impair the membrane fusion event necessary for subsequent virion penetration. Bypasses host T-cell signaling by inducing a transcriptional program nearly identical to that of anti-CD3 cell activation. Interaction with TCR-zeta chain up-regulates the Fas ligand (FasL). Increasing surface FasL molecules and decreasing surface MHC-I molecules on infected CD4(+) cells send attacking cytotoxic CD8+ T-lymphocytes into apoptosis. Functionally, plays a role in optimizing the host cell environment for viral replication without causing cell death by apoptosis. Protects the infected cells from apoptosis in order to keep them alive until the next virus generation is ready to strike. Inhibits the Fas and TNFR-mediated death signals by blocking MAP3K5/ASK1. Decreases the half-life of TP53, protecting the infected cell against p53-mediated apoptosis. Inhibits the apoptotic signals regulated by the Bcl-2 family proteins through the formation of a Nef/PI3-kinase/PAK2 complex that leads to activation of PAK2 and induces phosphorylation of host BAD. Its function is as follows. Extracellular Nef protein targets CD4(+) T-lymphocytes for apoptosis by interacting with CXCR4 surface receptors. The chain is Protein Nef from Homo sapiens (Human).